Here is a 201-residue protein sequence, read N- to C-terminus: UPF0301 protein RER_60040 (201 aa).

It belongs to the UPF0301 (AlgH) family.

This is UPF0301 protein RER_60040 from Rhodococcus erythropolis (strain PR4 / NBRC 100887).